A 601-amino-acid polypeptide reads, in one-letter code: Keratin, type II cytoskeletal 5 (601 aa).

A head region spans residues 1–168 (MSRQSTVSFR…DPTIQRVRTE (168 aa)). Phosphoserine occurs at positions 5, 8, 16, and 21. T24 carries the phosphothreonine; by CDK1 modification. 6 positions are modified to phosphoserine: S26, S36, S50, S64, S71, and S75. Residue T152 is modified to Phosphothreonine; by CDK1. A Phosphothreonine; by AURKB modification is found at T167. The tract at residues 169–204 (EREQIKTLNNKFASFIDKVRFLEQQNKVLDTKWALL) is coil 1A. One can recognise an IF rod domain in the interval 169 to 482 (EREQIKTLNN…KLLEGEECRL (314 aa)). A linker 1 region spans residues 205 to 223 (QEQGTKTVRQNLEPLLEQY). The tract at residues 224-316 (INNLRRQLDG…FFDAELSQMQ (93 aa)) is coil 1B. The interval 317–339 (THVSDTSVVLSMDNNRSLDLDSI) is linker 12. Residues 340–478 (IAEVKAQYED…ATYRKLLEGE (139 aa)) are coil 2. The tail stretch occupies residues 479–601 (ECRLSGEGVG…TSSSRKSFKS (123 aa)). The interval 576-601 (FGSGGGSSSSVKFVSTTSSSRKSFKS) is disordered. Low complexity predominate over residues 583–601 (SSSVKFVSTTSSSRKSFKS).

Belongs to the intermediate filament family. In terms of assembly, heterodimer of a type I and a type II keratin. Heterodimer with type I keratin KRT25 leading to the formation of keratin intermediate filament (KIF) network. Forms a heterodimer (via 2B domains) with KRT14 (via 2B domains). Interacts with TCHP. Interacts with EPPK1. Interacts with AMELX. Interacts with PKP1 (via N-terminus) and PKP2. Post-translationally, phosphorylated by CDK1, AURKB and Rho-kinase, phosphorylation is regulated by the cell cycle. Thr-24 phosphorylation, mediated by CDK1, peaks during prometaphase or metaphase cells with phosphorylated filamentous structures evident throughout the cytoplasm early mitosis. CDK1 phosphorylates Thr-24 in mitotic cells at the site of injury. O-glycosylated.

The protein resides in the cytoplasm. In terms of biological role, required for the formation of keratin intermediate filaments in the basal epidermis and maintenance of the skin barrier in response to mechanical stress. Regulates the recruitment of Langerhans cells to the epidermis, potentially by modulation of the abundance of macrophage chemotactic cytokines, macrophage inflammatory cytokines and CTNND1 localization in keratinocytes. This is Keratin, type II cytoskeletal 5 from Bos taurus (Bovine).